We begin with the raw amino-acid sequence, 522 residues long: Cytochrome P450 monooxygenase sirB (522 aa).

A helical transmembrane segment spans residues 22-42 (ASAILFCTLLTVFLFISQGTV). A glycan (N-linked (GlcNAc...) asparagine) is linked at N191. Residues 304-324 (VLHLSFAATGTVAILITHMIY) form a helical membrane-spanning segment. Residue C462 participates in heme binding.

It belongs to the cytochrome P450 family. Requires heme as cofactor.

It localises to the membrane. The protein operates within mycotoxin biosynthesis. Cytochrome P450 monooxygenase; part of the gene cluster that mediates the biosynthesis of sirodesmin PL, an epipolythiodioxopiperazine (ETP) characterized by a disulfide bridged cyclic dipeptide and that acts as a phytotoxin which is involved in the blackleg didease of canola. SirD catalyzes the O-prenylation of L-tyrosine (L-Tyr) in the presence of dimethylallyl diphosphate (DMAPP) to yield 4-O-dimethylallyl-L-Tyr, and therefore represents probably the first pathway-specific enzyme in the biosynthesis of sirodesmin PL. 4-O-dimethylallyl-L-Tyr, then undergoes condensation with L-Ser in a reaction catalyzed by the non-ribosomal peptide synthase sirP to form the diketopiperazine (DKP) backbone. Further bishydroxylation of the DKP performed by the cytochrome P450 monooxygenase sirC leads to the production of the intermediate phomamide. This step is essential to form the reactive thiol group required for toxicity of sirodesmin PL. The next steps of sirodesmin biosynthesis are not well understood yet, but some predictions could be made from intermediate compounds identification. Phomamide is converted into phomalizarine via oxidation, probably by sirT. Further oxidation, methylation (by sirM or sirN) and reduction steps convert phomalizarine to deacetyl sirodesmin. Finally, acetyltransferase sirH probably acetylates deacetyl sirodesmin to produce sirodesmin PL. This is Cytochrome P450 monooxygenase sirB from Leptosphaeria maculans (Blackleg fungus).